Consider the following 132-residue polypeptide: UPF0102 protein Acel_1550 (132 aa).

The protein belongs to the UPF0102 family.

In Acidothermus cellulolyticus (strain ATCC 43068 / DSM 8971 / 11B), this protein is UPF0102 protein Acel_1550.